The following is a 341-amino-acid chain: Glycerol-3-phosphate dehydrogenase [NAD(P)+] (341 aa).

4 residues coordinate NADPH: Ser-15, Trp-16, Arg-36, and Lys-110. Sn-glycerol 3-phosphate contacts are provided by Lys-110, Gly-139, and Ser-141. Ala-143 contacts NADPH. Sn-glycerol 3-phosphate-binding residues include Lys-194, Asp-247, Ser-257, Arg-258, and Asn-259. Residue Lys-194 is the Proton acceptor of the active site. Arg-258 provides a ligand contact to NADPH. The NADPH site is built by Val-282 and Glu-284.

This sequence belongs to the NAD-dependent glycerol-3-phosphate dehydrogenase family.

It localises to the cytoplasm. It carries out the reaction sn-glycerol 3-phosphate + NAD(+) = dihydroxyacetone phosphate + NADH + H(+). The catalysed reaction is sn-glycerol 3-phosphate + NADP(+) = dihydroxyacetone phosphate + NADPH + H(+). Its pathway is membrane lipid metabolism; glycerophospholipid metabolism. In terms of biological role, catalyzes the reduction of the glycolytic intermediate dihydroxyacetone phosphate (DHAP) to sn-glycerol 3-phosphate (G3P), the key precursor for phospholipid synthesis. The sequence is that of Glycerol-3-phosphate dehydrogenase [NAD(P)+] from Xanthomonas oryzae pv. oryzae (strain MAFF 311018).